Reading from the N-terminus, the 464-residue chain is Neuronal acetylcholine receptor subunit beta-3 (464 aa).

A signal peptide spans 1–30 (MTGFLRVFLVLSATLSGSWVTLTATAGLSS). Residues 31 to 238 (VAEHEDALLR…VTYSFVLRRL (208 aa)) are Extracellular-facing. Residues N55 and N172 are each glycosylated (N-linked (GlcNAc...) asparagine). A disulfide bridge links C159 with C173. Helical transmembrane passes span 239-263 (PLFY…VFYL), 271-288 (LSLS…LLVI), and 305-326 (YLLF…VINV). The Cytoplasmic segment spans residues 327–434 (HHRSSSTYHP…WKFVAQVLDR (108 aa)). A helical transmembrane segment spans residues 435–453 (IFLWLFLIASVLGSILIFI).

Belongs to the ligand-gated ion channel (TC 1.A.9) family. Acetylcholine receptor (TC 1.A.9.1) subfamily. Beta-3/CHRNB3 sub-subfamily. Neuronal AChR seems to be composed of two different type of subunits: alpha and beta. CHRNB3/beta-3 subunit is only able to form functional nAChRs when co-assembled with another beta subunit. Participates in pentameric assemblies along with CHRNA4/alpha-4 and CHRNB2/beta-2 subunits and with CHRNA6/alpha-6 as well, forming stoichiometries such as (CHRNA3:CHRNB4)2:CHRNB3, (CHRNA4:CHRNB2)2:CHRNB3 or (CHRNA6:CHRNB2)2:CHRNB3.

The protein resides in the synaptic cell membrane. Its subcellular location is the cell membrane. The catalysed reaction is Ca(2+)(in) = Ca(2+)(out). It carries out the reaction K(+)(in) = K(+)(out). The enzyme catalyses Na(+)(in) = Na(+)(out). Activated by a myriad of ligands such as acetylcholine, cytisine, nicotine, choline and epibatidine. Component of neuronal acetylcholine receptors (nAChRs) that function as pentameric, ligand-gated cation channels with high calcium permeability among other activities. nAChRs are excitatory neurotrasnmitter receptors formed by a collection of nAChR subunits known to mediate synaptic transmission in the nervous system and the neuromuscular junction. Each nAchR subunit confers differential attributes to channel properties, including activation, deactivation and desensitization kinetics, pH sensitivity, cation permeability, and binding to allosteric modulators. Has an accessory rather than functional role and is only able to form functional nAChRs when co-assembled with another beta subunit. Participates in pentameric assemblies along with CHRNA3, CHRNA4, CHRNA6, CHRNB2 and CHRNB4. Modulates receptor assembly and increases receptor sensitivity to nicotine when associated with CHRNB2, CHRNA4 and/or CHRNA6 as well as CHRNA3 and CHRNB4. Seems to play a role in nicotine addiction. The protein is Neuronal acetylcholine receptor subunit beta-3 (Chrnb3) of Rattus norvegicus (Rat).